We begin with the raw amino-acid sequence, 302 residues long: Formylmethanofuran--tetrahydromethanopterin formyltransferase (302 aa).

The protein belongs to the FTR family. Homotetramer.

It localises to the cytoplasm. It catalyses the reaction N-formylmethanofuran + 5,6,7,8-tetrahydromethanopterin + H(+) = N(5)-formyl-5,6,7,8-tetrahydromethanopterin + methanofuran. The protein operates within one-carbon metabolism; formaldehyde degradation; formate from formaldehyde (H(4)MPT route): step 4/5. In terms of biological role, catalyzes the transfer of a formyl group from 5-formyl tetrahydromethanopterin (5-formyl-H(4)MPT) to methanofuran (MFR) to produce formylmethanofuran (formyl-MFR) and tetrahydromethanopterin (H(4)MPT). This Methylobacillus flagellatus (strain ATCC 51484 / DSM 6875 / VKM B-1610 / KT) protein is Formylmethanofuran--tetrahydromethanopterin formyltransferase.